Reading from the N-terminus, the 149-residue chain is SsrA-binding protein (149 aa).

Residues 123–149 (KQFDKRETEKQRDWQREKARIMKGGKE) are disordered.

Belongs to the SmpB family.

Its subcellular location is the cytoplasm. Required for rescue of stalled ribosomes mediated by trans-translation. Binds to transfer-messenger RNA (tmRNA), required for stable association of tmRNA with ribosomes. tmRNA and SmpB together mimic tRNA shape, replacing the anticodon stem-loop with SmpB. tmRNA is encoded by the ssrA gene; the 2 termini fold to resemble tRNA(Ala) and it encodes a 'tag peptide', a short internal open reading frame. During trans-translation Ala-aminoacylated tmRNA acts like a tRNA, entering the A-site of stalled ribosomes, displacing the stalled mRNA. The ribosome then switches to translate the ORF on the tmRNA; the nascent peptide is terminated with the 'tag peptide' encoded by the tmRNA and targeted for degradation. The ribosome is freed to recommence translation, which seems to be the essential function of trans-translation. The protein is SsrA-binding protein of Cupriavidus taiwanensis (strain DSM 17343 / BCRC 17206 / CCUG 44338 / CIP 107171 / LMG 19424 / R1) (Ralstonia taiwanensis (strain LMG 19424)).